The following is an 875-amino-acid chain: Protein translocase subunit SecA (875 aa).

Residues Gln87, 105–109 (GEGKT), and Asp512 each bind ATP. The Zn(2+) site is built by Cys860, Cys862, Cys871, and His872.

Belongs to the SecA family. As to quaternary structure, monomer and homodimer. Part of the essential Sec protein translocation apparatus which comprises SecA, SecYEG and auxiliary proteins SecDF-YajC and YidC. It depends on Zn(2+) as a cofactor.

The protein localises to the cell inner membrane. It is found in the cytoplasm. It carries out the reaction ATP + H2O + cellular proteinSide 1 = ADP + phosphate + cellular proteinSide 2.. Its function is as follows. Part of the Sec protein translocase complex. Interacts with the SecYEG preprotein conducting channel. Has a central role in coupling the hydrolysis of ATP to the transfer of proteins into and across the cell membrane, serving both as a receptor for the preprotein-SecB complex and as an ATP-driven molecular motor driving the stepwise translocation of polypeptide chains across the membrane. This chain is Protein translocase subunit SecA, found in Buchnera aphidicola subsp. Acyrthosiphon pisum (strain APS) (Acyrthosiphon pisum symbiotic bacterium).